Here is a 100-residue protein sequence, read N- to C-terminus: Large ribosomal subunit protein bL21 (100 aa).

It belongs to the bacterial ribosomal protein bL21 family. Part of the 50S ribosomal subunit. Contacts protein L20.

Its function is as follows. This protein binds to 23S rRNA in the presence of protein L20. This is Large ribosomal subunit protein bL21 from Corynebacterium kroppenstedtii (strain DSM 44385 / JCM 11950 / CIP 105744 / CCUG 35717).